Consider the following 280-residue polypeptide: 4-deoxy-L-threo-5-hexosulose-uronate ketol-isomerase 1 (280 aa).

4 residues coordinate Zn(2+): His-198, His-200, Glu-205, and His-247.

It belongs to the KduI family. Zn(2+) is required as a cofactor.

It catalyses the reaction 5-dehydro-4-deoxy-D-glucuronate = 3-deoxy-D-glycero-2,5-hexodiulosonate. It participates in glycan metabolism; pectin degradation; 2-dehydro-3-deoxy-D-gluconate from pectin: step 4/5. Functionally, catalyzes the isomerization of 5-dehydro-4-deoxy-D-glucuronate to 3-deoxy-D-glycero-2,5-hexodiulosonate. The polypeptide is 4-deoxy-L-threo-5-hexosulose-uronate ketol-isomerase 1 (kduI1) (Rhizobium meliloti (strain 1021) (Ensifer meliloti)).